A 211-amino-acid polypeptide reads, in one-letter code: MIDTHDITGLILAGGRGSRMGGVDKGLQNFRGLPLALHTLMRLQPQVGDVMINANRNLAAYESFGVPVWPDGLADYAGPLAGFLTGLERCETPWLLTVPCDTPLFPPDLAARLAQAATREGADIAMAAAPEADERDGTVRVRTQPVFCLLRVTLLESLVRFTQGGGRKIDRWTEQHACAVVAFDQPGDDPHAFYNANTLAELHALEGLGHR.

GTP is bound by residues 12-14, Lys-25, Asn-53, Asp-71, and Asp-101; that span reads LAG. Asp-101 is a binding site for Mg(2+).

This sequence belongs to the MobA family. As to quaternary structure, monomer. It depends on Mg(2+) as a cofactor.

Its subcellular location is the cytoplasm. It carries out the reaction Mo-molybdopterin + GTP + H(+) = Mo-molybdopterin guanine dinucleotide + diphosphate. Its function is as follows. Transfers a GMP moiety from GTP to Mo-molybdopterin (Mo-MPT) cofactor (Moco or molybdenum cofactor) to form Mo-molybdopterin guanine dinucleotide (Mo-MGD) cofactor. This is Molybdenum cofactor guanylyltransferase from Acidovorax ebreus (strain TPSY) (Diaphorobacter sp. (strain TPSY)).